Here is a 449-residue protein sequence, read N- to C-terminus: Methylenetetrahydrofolate--tRNA-(uracil-5-)-methyltransferase TrmFO (449 aa).

FAD is bound at residue 9–14 (GGGMAG).

Belongs to the MnmG family. TrmFO subfamily. FAD serves as cofactor.

It localises to the cytoplasm. The catalysed reaction is uridine(54) in tRNA + (6R)-5,10-methylene-5,6,7,8-tetrahydrofolate + NADH + H(+) = 5-methyluridine(54) in tRNA + (6S)-5,6,7,8-tetrahydrofolate + NAD(+). It carries out the reaction uridine(54) in tRNA + (6R)-5,10-methylene-5,6,7,8-tetrahydrofolate + NADPH + H(+) = 5-methyluridine(54) in tRNA + (6S)-5,6,7,8-tetrahydrofolate + NADP(+). Its function is as follows. Catalyzes the folate-dependent formation of 5-methyl-uridine at position 54 (M-5-U54) in all tRNAs. This Ruegeria pomeroyi (strain ATCC 700808 / DSM 15171 / DSS-3) (Silicibacter pomeroyi) protein is Methylenetetrahydrofolate--tRNA-(uracil-5-)-methyltransferase TrmFO.